We begin with the raw amino-acid sequence, 570 residues long: MSEKHPGPLVVEGKLTDAERMKLESNYLRGTIAEDLNDGLTGGFKGDNFLLIRFHGMYQQDDRDIRAERAEQKLEPRHAMLLRCRLPGGVITTKQWQAIDKFAGENTIYGSIRLTNRQTFQFHGILKKNVKPVHQMLHSVGLDALATANDMNRNVLCTSNPYESQLHAEAYEWAKKISEHLLPRTRAYAEIWLDQEKVATTDEEPILGQTYLPRKFKTTVVIPPQNDIDLHANDMNFVAIAENGKLVGFNLLVGGGLSIEHGNKKTYARTASEFGYLPLEHTLAVAEAVVTTQRDWGNRTDRKNAKTKYTLERVGVETFKAEVERRAGIKFEPIRPYEFTGRGDRIGWVKGIDDNWHLTLFIENGRILDYPGRPLKTGLLEIAKIHKGDFRITANQNLIIAGVPESEKAKIEKIAKESGLMNAVTPQRENSMACVSFPTCPLAMAEAERFLPSFIDNIDNLMAKHGVSDEHIVMRVTGCPNGCGRAMLAEVGLVGKAPGRYNLHLSGNRIGTRIPRMYKENITEPEILASLDELIGRWAKEREAGEGFGDFTVRAGIIRPVLDPARDLWD.

Residues Cys434, Cys440, Cys479, and Cys483 each coordinate [4Fe-4S] cluster. Cys483 is a siroheme binding site.

The protein belongs to the nitrite and sulfite reductase 4Fe-4S domain family. Alpha(8)-beta(8). The alpha component is a flavoprotein, the beta component is a hemoprotein. Siroheme serves as cofactor. The cofactor is [4Fe-4S] cluster.

It carries out the reaction hydrogen sulfide + 3 NADP(+) + 3 H2O = sulfite + 3 NADPH + 4 H(+). It functions in the pathway sulfur metabolism; hydrogen sulfide biosynthesis; hydrogen sulfide from sulfite (NADPH route): step 1/1. In terms of biological role, component of the sulfite reductase complex that catalyzes the 6-electron reduction of sulfite to sulfide. This is one of several activities required for the biosynthesis of L-cysteine from sulfate. The protein is Sulfite reductase [NADPH] hemoprotein beta-component of Escherichia coli (strain ATCC 8739 / DSM 1576 / NBRC 3972 / NCIMB 8545 / WDCM 00012 / Crooks).